Consider the following 327-residue polypeptide: Pyruvate dehydrogenase E1 component subunit beta (327 aa).

Glu-60 provides a ligand contact to thiamine diphosphate.

Heterodimer of an alpha and a beta chain. Thiamine diphosphate serves as cofactor.

The enzyme catalyses N(6)-[(R)-lipoyl]-L-lysyl-[protein] + pyruvate + H(+) = N(6)-[(R)-S(8)-acetyldihydrolipoyl]-L-lysyl-[protein] + CO2. The pyruvate dehydrogenase complex catalyzes the overall conversion of pyruvate to acetyl-CoA and CO(2). It contains multiple copies of three enzymatic components: pyruvate dehydrogenase (E1), dihydrolipoamide acetyltransferase (E2) and lipoamide dehydrogenase (E3). The protein is Pyruvate dehydrogenase E1 component subunit beta (pdhB) of Acholeplasma laidlawii.